Here is a 281-residue protein sequence, read N- to C-terminus: NADPH-dependent 7-cyano-7-deazaguanine reductase (281 aa).

Residue 88–90 participates in substrate binding; that stretch reads IES. 90–91 serves as a coordination point for NADPH; the sequence is SK. C189 acts as the Thioimide intermediate in catalysis. Catalysis depends on D196, which acts as the Proton donor. 228–229 lines the substrate pocket; sequence HE. 257-258 lines the NADPH pocket; sequence RG.

The protein belongs to the GTP cyclohydrolase I family. QueF type 2 subfamily. Homodimer.

It is found in the cytoplasm. It catalyses the reaction 7-aminomethyl-7-carbaguanine + 2 NADP(+) = 7-cyano-7-deazaguanine + 2 NADPH + 3 H(+). The protein operates within tRNA modification; tRNA-queuosine biosynthesis. Functionally, catalyzes the NADPH-dependent reduction of 7-cyano-7-deazaguanine (preQ0) to 7-aminomethyl-7-deazaguanine (preQ1). The chain is NADPH-dependent 7-cyano-7-deazaguanine reductase from Yersinia pestis bv. Antiqua (strain Antiqua).